Consider the following 351-residue polypeptide: S-adenosylmethionine:tRNA ribosyltransferase-isomerase (351 aa).

It belongs to the QueA family. In terms of assembly, monomer.

The protein localises to the cytoplasm. It carries out the reaction 7-aminomethyl-7-carbaguanosine(34) in tRNA + S-adenosyl-L-methionine = epoxyqueuosine(34) in tRNA + adenine + L-methionine + 2 H(+). The protein operates within tRNA modification; tRNA-queuosine biosynthesis. Transfers and isomerizes the ribose moiety from AdoMet to the 7-aminomethyl group of 7-deazaguanine (preQ1-tRNA) to give epoxyqueuosine (oQ-tRNA). This chain is S-adenosylmethionine:tRNA ribosyltransferase-isomerase, found in Acinetobacter baumannii (strain SDF).